We begin with the raw amino-acid sequence, 417 residues long: Tyrosine--tRNA ligase (417 aa).

Position 39 (Tyr-39) interacts with L-tyrosine. Residues 44–53 carry the 'HIGH' region motif; that stretch reads ATATSLHIGN. L-tyrosine is bound by residues Tyr-176 and Gln-180. The 'KMSKS' region signature appears at 236-240; that stretch reads KMGKS. An ATP-binding site is contributed by Lys-239. The region spanning 350 to 416 is the S4 RNA-binding domain; the sequence is IGILSLLVTA…GKKKHVLVRP (67 aa).

The protein belongs to the class-I aminoacyl-tRNA synthetase family. TyrS type 1 subfamily. In terms of assembly, homodimer.

The protein resides in the cytoplasm. It catalyses the reaction tRNA(Tyr) + L-tyrosine + ATP = L-tyrosyl-tRNA(Tyr) + AMP + diphosphate + H(+). Its function is as follows. Catalyzes the attachment of tyrosine to tRNA(Tyr) in a two-step reaction: tyrosine is first activated by ATP to form Tyr-AMP and then transferred to the acceptor end of tRNA(Tyr). The protein is Tyrosine--tRNA ligase of Mesorhizobium japonicum (strain LMG 29417 / CECT 9101 / MAFF 303099) (Mesorhizobium loti (strain MAFF 303099)).